Here is a 729-residue protein sequence, read N- to C-terminus: Fatty acid oxidation complex subunit alpha (729 aa).

An enoyl-CoA hydratase/isomerase region spans residues 1–189 (MLYKGDTLYL…KIGLVDGVVK (189 aa)). A substrate-binding site is contributed by aspartate 296. The segment at 311 to 729 (ETPKQAAVLG…ARPVGDLKTA (419 aa)) is 3-hydroxyacyl-CoA dehydrogenase. Residues methionine 324, aspartate 343, 400 to 402 (VVE), lysine 407, and serine 429 each bind NAD(+). Residue histidine 450 is the For 3-hydroxyacyl-CoA dehydrogenase activity of the active site. Residue asparagine 453 participates in NAD(+) binding. Substrate-binding residues include asparagine 500 and tyrosine 660. A disordered region spans residues 708 to 729 (RHNEPYYPPVEPARPVGDLKTA).

This sequence in the N-terminal section; belongs to the enoyl-CoA hydratase/isomerase family. It in the C-terminal section; belongs to the 3-hydroxyacyl-CoA dehydrogenase family. As to quaternary structure, heterotetramer of two alpha chains (FadB) and two beta chains (FadA).

It catalyses the reaction a (3S)-3-hydroxyacyl-CoA + NAD(+) = a 3-oxoacyl-CoA + NADH + H(+). It carries out the reaction a (3S)-3-hydroxyacyl-CoA = a (2E)-enoyl-CoA + H2O. The catalysed reaction is a 4-saturated-(3S)-3-hydroxyacyl-CoA = a (3E)-enoyl-CoA + H2O. The enzyme catalyses (3S)-3-hydroxybutanoyl-CoA = (3R)-3-hydroxybutanoyl-CoA. It catalyses the reaction a (3Z)-enoyl-CoA = a 4-saturated (2E)-enoyl-CoA. It carries out the reaction a (3E)-enoyl-CoA = a 4-saturated (2E)-enoyl-CoA. Its pathway is lipid metabolism; fatty acid beta-oxidation. In terms of biological role, involved in the aerobic and anaerobic degradation of long-chain fatty acids via beta-oxidation cycle. Catalyzes the formation of 3-oxoacyl-CoA from enoyl-CoA via L-3-hydroxyacyl-CoA. It can also use D-3-hydroxyacyl-CoA and cis-3-enoyl-CoA as substrate. In Escherichia coli O139:H28 (strain E24377A / ETEC), this protein is Fatty acid oxidation complex subunit alpha.